A 111-amino-acid polypeptide reads, in one-letter code: Large ribosomal subunit protein bL20c (111 aa).

This sequence belongs to the bacterial ribosomal protein bL20 family.

It localises to the plastid. The protein localises to the chloroplast. Functionally, binds directly to 23S ribosomal RNA and is necessary for the in vitro assembly process of the 50S ribosomal subunit. It is not involved in the protein synthesizing functions of that subunit. The sequence is that of Large ribosomal subunit protein bL20c from Ostreococcus tauri.